The sequence spans 516 residues: Squalene epoxidase 4 (516 aa).

2 helical membrane passes run 2 to 22 (TYAWLWTLLAFVLTWMVFHLI) and 43 to 63 (ATDVIIVGAGVAGASLAYALA). Residues 53-54 (VA), 73-74 (ER), R81, R153, V169, D335, and M348 each bind FAD. The helical transmembrane segment at 435–455 (ILGGMNPHPLTLVLHLVAITL) threads the bilayer.

This sequence belongs to the squalene monooxygenase family. FAD serves as cofactor. Expressed mainly in seedlings and inflorescences.

Its subcellular location is the membrane. It carries out the reaction squalene + reduced [NADPH--hemoprotein reductase] + O2 = (S)-2,3-epoxysqualene + oxidized [NADPH--hemoprotein reductase] + H2O + H(+). The protein operates within terpene metabolism; lanosterol biosynthesis; lanosterol from farnesyl diphosphate: step 2/3. Catalyzes the stereospecific oxidation of squalene to (S)-2,3-epoxysqualene, and is considered to be a rate-limiting enzyme in steroid biosynthesis. This is Squalene epoxidase 4 (SQE4) from Arabidopsis thaliana (Mouse-ear cress).